Reading from the N-terminus, the 246-residue chain is tRNA (guanine-N(7)-)-methyltransferase (246 aa).

Residues E77, E102, D129, and D152 each contribute to the S-adenosyl-L-methionine site. D152 is an active-site residue. Residues K156, D188, and 225-228 (TKFE) each bind substrate.

This sequence belongs to the class I-like SAM-binding methyltransferase superfamily. TrmB family.

The enzyme catalyses guanosine(46) in tRNA + S-adenosyl-L-methionine = N(7)-methylguanosine(46) in tRNA + S-adenosyl-L-homocysteine. It functions in the pathway tRNA modification; N(7)-methylguanine-tRNA biosynthesis. Its function is as follows. Catalyzes the formation of N(7)-methylguanine at position 46 (m7G46) in tRNA. The chain is tRNA (guanine-N(7)-)-methyltransferase from Haemophilus influenzae (strain ATCC 51907 / DSM 11121 / KW20 / Rd).